Consider the following 219-residue polypeptide: Thymidylate kinase (219 aa).

9 to 16 lines the ATP pocket; it reads GIEGCGKT.

The protein belongs to the thymidylate kinase family.

The catalysed reaction is dTMP + ATP = dTDP + ADP. In terms of biological role, phosphorylation of dTMP to form dTDP in both de novo and salvage pathways of dTTP synthesis. The protein is Thymidylate kinase of Syntrophus aciditrophicus (strain SB).